The chain runs to 137 residues: Cellular retinoic acid-binding protein 1 (137 aa).

Positions 21-31 (KALGVNAMLRK) match the Nuclear localization signal motif. 132–134 (RIY) provides a ligand contact to all-trans-retinoate.

The protein belongs to the calycin superfamily. Fatty-acid binding protein (FABP) family.

It localises to the cytoplasm. Cytosolic CRABPs may regulate the access of retinoic acid to the nuclear retinoic acid receptors. The protein is Cellular retinoic acid-binding protein 1 (Crabp1) of Mus musculus (Mouse).